We begin with the raw amino-acid sequence, 101 residues long: Putative pterin-4-alpha-carbinolamine dehydratase (101 aa).

This sequence belongs to the pterin-4-alpha-carbinolamine dehydratase family.

The catalysed reaction is (4aS,6R)-4a-hydroxy-L-erythro-5,6,7,8-tetrahydrobiopterin = (6R)-L-erythro-6,7-dihydrobiopterin + H2O. The chain is Putative pterin-4-alpha-carbinolamine dehydratase from Rhizobium etli (strain ATCC 51251 / DSM 11541 / JCM 21823 / NBRC 15573 / CFN 42).